The primary structure comprises 227 residues: MFDLSDQLITMGLWSISIGAFGAAVAGILLANTDFFLSQTEKATLDYLEETELKTIGEEPRLFKAKDLWERDGAVIMAVRRPGCFLCREEASGLSTLKPQLDQLGVPLYAIVKENIGNEVEHFQPYFNGKVFLDAKGQFYGPQKRKMMLLGLVRLGVWQNFRRAWKGGFEGNLEGEGLILGGMFVIGSGKQGILLEHREKEFGDKANLTAVLDAARKISKQTAQNDN.

The tract at residues 13-111 (LWSISIGAFG…DQLGVPLYAI (99 aa)) is thioredoxin fold. Active-site redox-active residues include Cys84 and Cys87.

The protein belongs to the peroxiredoxin-like PRXL2 family. PRXL2A subfamily.

It is found in the cytoplasm. Its function is as follows. Involved in redox regulation of the cell. Acts as an antioxidant. This chain is Peroxiredoxin-like 2A (prxl2a), found in Xenopus laevis (African clawed frog).